The primary structure comprises 1154 residues: Polyketide biosynthesis protein ThaF (1154 aa).

The segment at 330–714 (MHAFLFPGQG…TNGIAPAARV (385 aa)) is acyl transferase. Residues 627–689 (SAVAASAPPR…PAPAPAPAPA (63 aa)) are disordered. Positions 641 to 672 (ADAQPPAASPARAATAASTMPPASASASASAP) are enriched in low complexity. Residues 673-689 (APAPAPAPAPAPAPAPA) are compositionally biased toward pro residues.

This sequence in the N-terminal section; belongs to the FabD family.

It is found in the cytoplasm. The enzyme catalyses holo-[ACP] + malonyl-CoA = malonyl-[ACP] + CoA. It participates in antibiotic biosynthesis. Its function is as follows. Involved in production of the polyketide antibiotic thailandamide. Probably has an acyl transferase activity and could also have a flavin mononucleotide-dependent oxidoreductase activity. The chain is Polyketide biosynthesis protein ThaF from Burkholderia thailandensis (strain ATCC 700388 / DSM 13276 / CCUG 48851 / CIP 106301 / E264).